Reading from the N-terminus, the 271-residue chain is Mannosyl-3-phosphoglycerate phosphatase (271 aa).

The Nucleophile role is filled by Asp-13. Positions 13, 15, and 214 each coordinate Mg(2+).

This sequence belongs to the HAD-like hydrolase superfamily. MPGP family. Mg(2+) serves as cofactor.

Its subcellular location is the cytoplasm. It carries out the reaction 2-O-(alpha-D-mannosyl)-3-phosphoglycerate + H2O = (2R)-2-O-(alpha-D-mannosyl)-glycerate + phosphate. The sequence is that of Mannosyl-3-phosphoglycerate phosphatase (yedP) from Escherichia coli O157:H7.